A 211-amino-acid chain; its full sequence is Tudor-interacting repair regulator protein (211 aa).

Glycyl lysine isopeptide (Lys-Gly) (interchain with G-Cter in ubiquitin) cross-links involve residues K10 and K151. An interaction with PXN region spans residues 118–205 (TLEQLHAVEI…TEKQKKALEK (88 aa)).

The protein belongs to the Nudix hydrolase family. TIRR subfamily. In terms of assembly, homodimer. Interacts with TP53BP1 (via the Tudor-like domain); interaction is abolished following DNA damage and TP53BP1 phosphorylation by ATM. Interacts (via the cytoplasmic part) with SDC4. Interacts with TGFB1I1 and PXN.

The protein resides in the nucleus. Its function is as follows. Key regulator of TP53BP1 required to stabilize TP53BP1 and regulate its recruitment to chromatin. In absence of DNA damage, interacts with the tandem Tudor-like domain of TP53BP1, masking the region that binds histone H4 dimethylated at 'Lys-20' (H4K20me2), thereby preventing TP53BP1 recruitment to chromatin and maintaining TP53BP1 localization to the nucleus. Following DNA damage, ATM-induced phosphorylation of TP53BP1 and subsequent recruitment of RIF1 leads to dissociate NUDT16L1/TIRR from TP53BP1, unmasking the tandem Tudor-like domain and allowing recruitment of TP53BP1 to DNA double strand breaks (DSBs). Binds U8 snoRNA. This chain is Tudor-interacting repair regulator protein, found in Homo sapiens (Human).